The sequence spans 299 residues: tRNA dimethylallyltransferase (299 aa).

11-18 (GPTAVGKT) contacts ATP. 13–18 (TAVGKT) lines the substrate pocket. The interaction with substrate tRNA stretch occupies residues 36 to 39 (DSQQ).

This sequence belongs to the IPP transferase family. As to quaternary structure, monomer. Requires Mg(2+) as cofactor.

It carries out the reaction adenosine(37) in tRNA + dimethylallyl diphosphate = N(6)-dimethylallyladenosine(37) in tRNA + diphosphate. Functionally, catalyzes the transfer of a dimethylallyl group onto the adenine at position 37 in tRNAs that read codons beginning with uridine, leading to the formation of N6-(dimethylallyl)adenosine (i(6)A). This chain is tRNA dimethylallyltransferase, found in Streptococcus pyogenes serotype M12 (strain MGAS2096).